Here is a 120-residue protein sequence, read N- to C-terminus: UPF0145 protein Mboo_1021 (120 aa).

This sequence belongs to the UPF0145 family.

This chain is UPF0145 protein Mboo_1021, found in Methanoregula boonei (strain DSM 21154 / JCM 14090 / 6A8).